Here is a 429-residue protein sequence, read N- to C-terminus: Glutamyl-tRNA reductase (429 aa).

Substrate-binding positions include 50 to 53, serine 116, 121 to 123, and glutamine 127; these read TCNR and EPQ. Cysteine 51 (nucleophile) is an active-site residue. An NADP(+)-binding site is contributed by 196–201; the sequence is GAGEMA.

It belongs to the glutamyl-tRNA reductase family. In terms of assembly, homodimer.

The catalysed reaction is (S)-4-amino-5-oxopentanoate + tRNA(Glu) + NADP(+) = L-glutamyl-tRNA(Glu) + NADPH + H(+). The protein operates within porphyrin-containing compound metabolism; protoporphyrin-IX biosynthesis; 5-aminolevulinate from L-glutamyl-tRNA(Glu): step 1/2. Catalyzes the NADPH-dependent reduction of glutamyl-tRNA(Glu) to glutamate 1-semialdehyde (GSA). This is Glutamyl-tRNA reductase from Thermodesulfovibrio yellowstonii (strain ATCC 51303 / DSM 11347 / YP87).